The following is a 505-amino-acid chain: Exoglucanase 1 (505 aa).

An N-terminal signal peptide occupies residues 1–17 (MYRKLAVISAFLAAARA). A Pyrrolidone carboxylic acid modification is found at Gln-18. Residues 18–449 (QQVCTQQAET…GSTGGNTGSN (432 aa)) form a catalytic region. Intrachain disulfides connect Cys-21–Cys-88, Cys-36–Cys-41, Cys-66–Cys-87, and Cys-77–Cys-83. Residues Asn-93 and Asn-126 are each glycosylated (N-linked (GlcNAc...) asparagine). 6 cysteine pairs are disulfide-bonded: Cys-151–Cys-410, Cys-185–Cys-223, Cys-189–Cys-222, Cys-243–Cys-269, Cys-251–Cys-256, and Cys-274–Cys-344. The Nucleophile role is filled by Glu-225. Glu-230 functions as the Proton donor/acceptor in the catalytic mechanism. Residues Asn-283 and Asn-397 are each glycosylated (N-linked (GlcNAc...) asparagine). Disordered stretches follow at residues 399-423 (TASTPGAKRGSCSTSSGVPAQVEAQ) and 440-472 (GSTGGNTGSNPPGTSTTRAPPSSTGSSPTATQT). The segment covering 409 to 423 (SCSTSSGVPAQVEAQ) has biased composition (polar residues). Over residues 447–470 (GSNPPGTSTTRAPPSSTGSSPTAT) the composition is skewed to low complexity. Residues 450–468 (PPGTSTTRAPPSSTGSSPT) form a linker region. A CBM1 domain is found at 469-505 (ATQTHYGQCGGTGWTGPTRCASGYTCQVLNPFYSQCL).

Belongs to the glycosyl hydrolase 7 (cellulase C) family. O-glycosylated. O-glycosylation of the cellulase linker provides protection from proteolysis. Linker glycans also contribute to binding affinity of cellobiohydrolases to cellulose.

The protein resides in the secreted. It catalyses the reaction Hydrolysis of (1-&gt;4)-beta-D-glucosidic linkages in cellulose and cellotetraose, releasing cellobiose from the non-reducing ends of the chains.. Exocellobiohydrolases (CBH) that catalyzes the hydrolysis of 1,4-beta-D-glucosidic bonds in cellulose to release the disaccharide cellobiose. The degradation of cellulose involves an interplay between different cellulolytic enzymes. Hydrolysis starts with endoglucanases (EGs), which cut internal beta-1,4-glucosidic bonds in cellulose to reduce the polymerization degree of the substrate and create new chain ends for exocellobiohydrolases (CBHs). The CBHs release the disaccharide cellobiose from the non-reducing end of the cellulose polymer chain. Finally, beta-1,4-glucosidases hydrolyze the cellobiose and other short cello-oligosaccharides into glucose units. The protein is Exoglucanase 1 (cbh1) of Trichoderma harzianum (Hypocrea lixii).